The following is a 757-amino-acid chain: MDVNPTLLFLKVPAQNAISTTFPYTGDPPYSHGTGTGYTMDTVNRTHQYSEKGKWTTNTETGAHQLNPIDGPLPEDNEPSGYAQTDCVLEAMAFLEESHPGIFENSCLETMEVIQQTRVDKLTQGRQTYDWTLNRNQPAATALANTIEVFRSNGLTANESGRLIDFLKDVIESMDKEEMEITTHFQRKRRVRDNMTKKMVTQRTIGKKKQRLNKRSYLIRALTLNTMTKDAERGKLKRRAIATPGMQIRGFVYFVETLARSICEKLEQSGLPVGGNEKKAKLANVVRKMMTNSQDTELSFTITGDNTKWNENQNPRMFLAMITYITRNQPEWFRNVLSIAPIMFSNKMARLGKGYMFKSKSMKLRTQIPAEMLASIDLKYFNESTRKKIEKIRPLLIDGTVSLSPGMMMGMFNMLSTVLGVSILNLGQKKYTKTTYWWDGLQSSDDFALIVNAPNHEGIQAGVDRFYRTCKLVGINMSKKKSYINRTGTFEFTSFFYRYGFVANFSMELPSFGVSGINESADMSIGVTVIKNNMINNDLGPATAQLALQLFIKDYRYTYRCHRGDTQIQTRRSFELKKLWEQTRSKAGLLVSDGGPNLYNIRNLHIPEVCLKWELMDEDYQGRLCNPLNPFVSHKEIESVNNAVVMPAHGPAKSMEYDAVATTHSWIPKRNRSILNTSQRGILEDEQMYQKCCNLFEKFFPSSSYRRPVGISSMVEAMVSRARIDARIDFESGRIKKEEFAEIMKICSTIEELRRQK.

Residues 56-78 (TTNTETGAHQLNPIDGPLPEDNE) form a disordered region. Short sequence motifs (nuclear localization signal) lie at residues 187-195 (RKRRVRDNM) and 203-216 (RTIG…NKRS). The interval 249–256 (RGFVYFVE) is promoter-binding site. The RdRp catalytic domain occupies 286-483 (VRKMMTNSQD…GINMSKKKSY (198 aa)).

This sequence belongs to the influenza viruses polymerase PB1 family. In terms of assembly, influenza RNA polymerase is composed of three subunits: PB1, PB2 and PA. Interacts (via N-terminus) with PA (via C-terminus). Interacts (via C-terminus) with PB2 (via N-terminus); this interaction is essential for transcription initiation. Phosphorylated by host PRKCA.

It localises to the host nucleus. It is found in the host cytoplasm. It catalyses the reaction RNA(n) + a ribonucleoside 5'-triphosphate = RNA(n+1) + diphosphate. Functionally, RNA-dependent RNA polymerase which is responsible for replication and transcription of virus RNA segments. The transcription of viral mRNAs occurs by a unique mechanism called cap-snatching. 5' methylated caps of cellular mRNAs are cleaved after 10-13 nucleotides by PA. In turn, these short capped RNAs are used as primers by PB1 for transcription of viral mRNAs. During virus replication, PB1 initiates RNA synthesis and copy vRNA into complementary RNA (cRNA) which in turn serves as a template for the production of more vRNAs. This chain is RNA-directed RNA polymerase catalytic subunit, found in Aves (Human).